Consider the following 696-residue polypeptide: Interleukin-1 receptor accessory protein-like 1 (696 aa).

The first 18 residues, 1 to 18 (MKAPIPHLILLYATFTQS), serve as a signal peptide directing secretion. Positions 19–134 (LKVVTKRGSA…YCMKVSISLT (116 aa)) constitute an Ig-like 1 domain. At 19–357 (LKVVTKRGSA…LLHKRELMYT (339 aa)) the chain is on the extracellular side. 2 disulfide bridges follow: Cys31–Cys126 and Cys53–Cys118. N-linked (GlcNAc...) asparagine glycosylation is found at Asn63, Asn122, and Asn138. Intrachain disulfides connect Cys143–Cys185 and Cys164–Cys216. Ig-like domains follow at residues 143-232 (CYNS…TELT) and 242-350 (PKLL…VLLH). 3 N-linked (GlcNAc...) asparagine glycosylation sites follow: Asn213, Asn264, and Asn331. Residues Cys267 and Cys334 are joined by a disulfide bond. Residues 358–378 (VELAGGLGAILLLLVCLVTIY) traverse the membrane as a helical segment. The Cytoplasmic segment spans residues 379–696 (KCYKIEIMLF…RETSISSVIW (318 aa)). The TIR domain maps to 403–559 (KDYDAYLSYT…KFWKRLQYEM (157 aa)). Residue Glu491 is part of the active site. The interaction with NCS1 stretch occupies residues 549–644 (SKFWKRLQYE…TGTLPLTSIG (96 aa)). Positions 659–680 (GQRPQTKSSREQNPDEAHTNSA) are disordered. Over residues 666–676 (SSREQNPDEAH) the composition is skewed to basic and acidic residues.

It belongs to the interleukin-1 receptor family. As to quaternary structure, homodimer. Interacts (calcium-independent) with NCS1/FREQ. Interacts (via the first immunoglobilin domain) with PTPRD (via the second immunoglobilin domain); this interaction is PTPRD-splicing-dependent and induces pre- and post-synaptic differentiation of neurons and is required for IL1RAPL1-mediated synapse formation.

The protein resides in the cell membrane. It is found in the cytoplasm. The protein localises to the cell projection. Its subcellular location is the axon. It localises to the dendrite. The catalysed reaction is NAD(+) + H2O = ADP-D-ribose + nicotinamide + H(+). Functionally, may regulate secretion and presynaptic differentiation through inhibition of the activity of N-type voltage-gated calcium channel. May activate the MAP kinase JNK. Plays a role in neurite outgrowth. During dendritic spine formation can bidirectionally induce pre- and post-synaptic differentiation of neurons by trans-synaptically binding to PTPRD. In Pongo pygmaeus (Bornean orangutan), this protein is Interleukin-1 receptor accessory protein-like 1 (IL1RAPL1).